The sequence spans 204 residues: Putative t-SNARE coiled-coil homology domain-containing protein L657 (204 aa).

2 t-SNARE coiled-coil homology domains span residues 9 to 71 and 140 to 202; these read SDYY…MDHV and DNSR…IKHT. Positions 159–181 form a coiled coil; that stretch reads VLEKQANDISNILDEQNNTLEII.

The protein is Putative t-SNARE coiled-coil homology domain-containing protein L657 of Acanthamoeba polyphaga (Amoeba).